Consider the following 318-residue polypeptide: Ribonuclease Z (318 aa).

Residues histidine 62, histidine 64, aspartate 66, histidine 67, histidine 144, aspartate 215, and histidine 273 each coordinate Zn(2+). The Proton acceptor role is filled by aspartate 66.

The protein belongs to the RNase Z family. In terms of assembly, homodimer. Zn(2+) is required as a cofactor.

The enzyme catalyses Endonucleolytic cleavage of RNA, removing extra 3' nucleotides from tRNA precursor, generating 3' termini of tRNAs. A 3'-hydroxy group is left at the tRNA terminus and a 5'-phosphoryl group is left at the trailer molecule.. In terms of biological role, zinc phosphodiesterase, which displays some tRNA 3'-processing endonuclease activity. Probably involved in tRNA maturation, by removing a 3'-trailer from precursor tRNA. This Prochlorococcus marinus (strain MIT 9313) protein is Ribonuclease Z.